The chain runs to 112 residues: Large ribosomal subunit protein uL22 (112 aa).

Belongs to the universal ribosomal protein uL22 family. As to quaternary structure, part of the 50S ribosomal subunit.

Its function is as follows. This protein binds specifically to 23S rRNA; its binding is stimulated by other ribosomal proteins, e.g. L4, L17, and L20. It is important during the early stages of 50S assembly. It makes multiple contacts with different domains of the 23S rRNA in the assembled 50S subunit and ribosome. The globular domain of the protein is located near the polypeptide exit tunnel on the outside of the subunit, while an extended beta-hairpin is found that lines the wall of the exit tunnel in the center of the 70S ribosome. The polypeptide is Large ribosomal subunit protein uL22 (Legionella pneumophila subsp. pneumophila (strain Philadelphia 1 / ATCC 33152 / DSM 7513)).